The chain runs to 198 residues: Cell division protein SepF (198 aa).

The disordered stretch occupies residues 170-198 (EVPQPPARPARPASTNPPAWGNETNRMAQ). Residues 179-188 (ARPASTNPPA) are compositionally biased toward low complexity.

The protein belongs to the SepF family. As to quaternary structure, homodimer. Interacts with FtsZ.

It localises to the cytoplasm. Its function is as follows. Cell division protein that is part of the divisome complex and is recruited early to the Z-ring. Probably stimulates Z-ring formation, perhaps through the cross-linking of FtsZ protofilaments. Its function overlaps with FtsA. In Trichormus variabilis (strain ATCC 29413 / PCC 7937) (Anabaena variabilis), this protein is Cell division protein SepF.